A 261-amino-acid polypeptide reads, in one-letter code: Cytochrome c oxidase subunit 3 (261 aa).

At 1-15 the chain is on the mitochondrial matrix side; sequence MSHQAHAYHMVDPSP. Residues 16 to 34 traverse the membrane as a helical segment; that stretch reads WPLTGAGAALLMTSGLAMW. Topologically, residues 35–40 are mitochondrial intermembrane; sequence FHKNSC. A helical transmembrane segment spans residues 41 to 66; that stretch reads ILMTLGLILMLLTMYQWWRDIVREGT. At 67–72 the chain is on the mitochondrial matrix side; the sequence is FLGHHT. A helical transmembrane segment spans residues 73–105; that stretch reads SPVQQGLRYGMILFIISEVCFFAGFFWAFYHAS. Residues 106–128 lie on the Mitochondrial intermembrane side of the membrane; sequence LAPTPELGLTWPPTGINPLNPFE. A helical transmembrane segment spans residues 129-152; that stretch reads VPLLNTAVLLASGVSVTWAHHSIT. At 153-155 the chain is on the mitochondrial matrix side; it reads EKN. Residues 156 to 183 traverse the membrane as a helical segment; that stretch reads RTETTQALTLTVLLGLYFTALQIMEYYE. At 184–190 the chain is on the mitochondrial intermembrane side; the sequence is TPFTMAD. A helical membrane pass occupies residues 191-223; the sequence is GVYGSTFFVATGFHGLHVIIGSLFLLTCLLRHL. The Mitochondrial matrix segment spans residues 224-232; it reads QYHFTSKHH. Residues 233–256 traverse the membrane as a helical segment; it reads FGFEAAAWYWHFVDVVWLFLYISI. The Mitochondrial intermembrane portion of the chain corresponds to 257-261; it reads YWWGS.

It belongs to the cytochrome c oxidase subunit 3 family. As to quaternary structure, component of the cytochrome c oxidase (complex IV, CIV), a multisubunit enzyme composed of 14 subunits. The complex is composed of a catalytic core of 3 subunits MT-CO1, MT-CO2 and MT-CO3, encoded in the mitochondrial DNA, and 11 supernumerary subunits COX4I, COX5A, COX5B, COX6A, COX6B, COX6C, COX7A, COX7B, COX7C, COX8 and NDUFA4, which are encoded in the nuclear genome. The complex exists as a monomer or a dimer and forms supercomplexes (SCs) in the inner mitochondrial membrane with NADH-ubiquinone oxidoreductase (complex I, CI) and ubiquinol-cytochrome c oxidoreductase (cytochrome b-c1 complex, complex III, CIII), resulting in different assemblies (supercomplex SCI(1)III(2)IV(1) and megacomplex MCI(2)III(2)IV(2)).

The protein localises to the mitochondrion inner membrane. The catalysed reaction is 4 Fe(II)-[cytochrome c] + O2 + 8 H(+)(in) = 4 Fe(III)-[cytochrome c] + 2 H2O + 4 H(+)(out). In terms of biological role, component of the cytochrome c oxidase, the last enzyme in the mitochondrial electron transport chain which drives oxidative phosphorylation. The respiratory chain contains 3 multisubunit complexes succinate dehydrogenase (complex II, CII), ubiquinol-cytochrome c oxidoreductase (cytochrome b-c1 complex, complex III, CIII) and cytochrome c oxidase (complex IV, CIV), that cooperate to transfer electrons derived from NADH and succinate to molecular oxygen, creating an electrochemical gradient over the inner membrane that drives transmembrane transport and the ATP synthase. Cytochrome c oxidase is the component of the respiratory chain that catalyzes the reduction of oxygen to water. Electrons originating from reduced cytochrome c in the intermembrane space (IMS) are transferred via the dinuclear copper A center (CU(A)) of subunit 2 and heme A of subunit 1 to the active site in subunit 1, a binuclear center (BNC) formed by heme A3 and copper B (CU(B)). The BNC reduces molecular oxygen to 2 water molecules using 4 electrons from cytochrome c in the IMS and 4 protons from the mitochondrial matrix. The chain is Cytochrome c oxidase subunit 3 (MT-CO3) from Petromyzon marinus (Sea lamprey).